Here is a 418-residue protein sequence, read N- to C-terminus: Gamma-glutamyl phosphate reductase (418 aa).

Belongs to the gamma-glutamyl phosphate reductase family.

The protein localises to the cytoplasm. The catalysed reaction is L-glutamate 5-semialdehyde + phosphate + NADP(+) = L-glutamyl 5-phosphate + NADPH + H(+). It participates in amino-acid biosynthesis; L-proline biosynthesis; L-glutamate 5-semialdehyde from L-glutamate: step 2/2. Its function is as follows. Catalyzes the NADPH-dependent reduction of L-glutamate 5-phosphate into L-glutamate 5-semialdehyde and phosphate. The product spontaneously undergoes cyclization to form 1-pyrroline-5-carboxylate. This chain is Gamma-glutamyl phosphate reductase, found in Pelodictyon phaeoclathratiforme (strain DSM 5477 / BU-1).